The primary structure comprises 445 residues: Neuropeptide Y receptor type 5 (445 aa).

The Extracellular segment spans residues 1–42 (MEFKLEEHFNKTFVTENNTAAARNAAFPAWEDYRGSVDDLQY). N-linked (GlcNAc...) asparagine glycosylation is found at Asn10 and Asn17. Residues 43–63 (FLIGLYTFVSLLGFMGNLLIL) traverse the membrane as a helical segment. At 64 to 77 (MAVMKKRNQKTTVN) the chain is on the cytoplasmic side. The chain crosses the membrane as a helical span at residues 78–98 (FLIGNLAFSDILVVLFCSPFT). Over 99–117 (LTSVLLDQWMFGKAMCHIM) the chain is Extracellular. A disulfide bond links Cys114 and Cys198. The helical transmembrane segment at 118-138 (PFLQCVSVLVSTLILISIAIV) threads the bilayer. The Cytoplasmic segment spans residues 139–156 (RYHMIKHPISNNLTANHG). Residues 157–177 (YFLIATVWTLGFAICSPLPVF) traverse the membrane as a helical segment. Over 178–208 (HSLVELKETFGSALLSSKYLCVESWPSDSYR) the chain is Extracellular. A helical transmembrane segment spans residues 209–229 (IAFTISLLLVQYILPLVCLTV). The Cytoplasmic portion of the chain corresponds to 230–368 (SHTSVCRSIS…KKRSRSVFYR (139 aa)). A helical transmembrane segment spans residues 369-389 (LTILILVFAVSWMPLHVFHVV). At 390–406 (TDFNDNLISNRHFKLVY) the chain is on the extracellular side. The helical transmembrane segment at 407–427 (CICHLLGMMSCCLNPILYGFL) threads the bilayer. Residues 428 to 445 (NNGIKADLRALIHCLHMS) lie on the Cytoplasmic side of the membrane. Cys441 is lipidated: S-palmitoyl cysteine.

Belongs to the G-protein coupled receptor 1 family. In terms of tissue distribution, brain; hypothalamus.

The protein resides in the cell membrane. Its function is as follows. Receptor for neuropeptide Y and peptide YY. The activity of this receptor is mediated by G proteins that inhibit adenylate cyclase activity. Seems to be associated with food intake. Could be involved in feeding disorders. The protein is Neuropeptide Y receptor type 5 (Npy5r) of Rattus norvegicus (Rat).